The sequence spans 284 residues: MEMO1 family protein Mevan_0697 (284 aa).

It belongs to the MEMO1 family.

The sequence is that of MEMO1 family protein Mevan_0697 from Methanococcus vannielii (strain ATCC 35089 / DSM 1224 / JCM 13029 / OCM 148 / SB).